The sequence spans 738 residues: MDFNRSFTSNLGSAGSAKSQQSMFKALRRLHGQNLESRGLHDMTEAFQSFVTRARFFSIGKLRRTWSHSAAEFMKYRRLLPMLLADGDAFDGGETDDFDASIAFQHTSRDDRKIVVSNISAKVTQSQLQSFFSQYGKITSCILPREEKKTSVFGTLPKHSRNCGTATITFKKSEHADRAKNANPEELKFYDQVMVVSAYVSKKRGGKGLVLSDDVGSREDTPLSRASSTQSLASGSEQSFNLGNVPDKILRRVISFLPIHETIRLERVNKKFMEESIKSWELVNKIALARETVFNKQRPMRTSHLKAILTRAGAHLRSLDVSGIVHLLDDRRALKVIATCCPNLVDLDISGTHAQAEALEELGESLSHLEQLSYRGMETTGDKAFYFLLKNCGHSLKFVDLRNSKRLHGRSFKLFGSQLESLYLDGSSKVDEMAFEDLCTSCGGLKELRINECYKITDENLSMIARRMEDLSILTLCGDGFKSLTSAGLIHISHMRNITELALDYNALVNDELLISISAGLPLLSSLSLANAGNDSSITAEGVSAIKNLKELTQLDASSLAAVNSKVLEQLGSLKKLEIIQLRNCTYLGDDGVRAKLRMPNIRHVDLSGSILVSNDSIQQFIKAFPSGPKLPPITLVVGGTAADASKLSVRGSRVVVDFSDYSTIVTMQTSQCSSSKFAIGGSASDAEGSDDEFEALTAQRSFYIDAVCGEEESPITDDGKLAEWAEKEARSLGLIKD.

One can recognise an RRM domain in the interval 112 to 201 (RKIVVSNISA…QVMVVSAYVS (90 aa)). The disordered stretch occupies residues 211 to 237 (LSDDVGSREDTPLSRASSTQSLASGSE). Positions 224-237 (SRASSTQSLASGSE) are enriched in polar residues. Positions 239–297 (SFNLGNVPDKILRRVISFLPIHETIRLERVNKKFMEESIKSWELVNKIALARETVFNKQ) constitute an F-box domain.

In Caenorhabditis elegans, this protein is Putative RNA-binding protein EEED8.10.